The primary structure comprises 472 residues: Methanethiol oxidase (472 aa).

It belongs to the selenium-binding protein family.

The protein resides in the nucleus. The protein localises to the cytoplasm. Its subcellular location is the cytosol. It localises to the membrane. It catalyses the reaction methanethiol + O2 + H2O = hydrogen sulfide + formaldehyde + H2O2 + H(+). It participates in organosulfur degradation. Its function is as follows. Catalyzes the oxidation of methanethiol, an organosulfur compound known to be produced in substantial amounts by gut bacteria. Selenium-binding protein which may be involved in the sensing of reactive xenobiotics in the cytoplasm. May be involved in intra-Golgi protein transport. This Xenopus laevis (African clawed frog) protein is Methanethiol oxidase (selenbp1-b).